The chain runs to 138 residues: ATP synthase epsilon chain (138 aa).

The protein belongs to the ATPase epsilon chain family. As to quaternary structure, F-type ATPases have 2 components, CF(1) - the catalytic core - and CF(0) - the membrane proton channel. CF(1) has five subunits: alpha(3), beta(3), gamma(1), delta(1), epsilon(1). CF(0) has three main subunits: a, b and c.

Its subcellular location is the cell inner membrane. Its function is as follows. Produces ATP from ADP in the presence of a proton gradient across the membrane. The polypeptide is ATP synthase epsilon chain (Blochmanniella floridana).